Here is a 1372-residue protein sequence, read N- to C-terminus: Serine protease pic autotransporter (1372 aa).

The signal sequence occupies residues 1–55 (MNKVYSLKYCPVTGGLIAVSELARRVIKKTCRRLTHILLAGIPAICLCYSQISQA). In terms of domain architecture, Peptidase S6 spans 56-301 (GIVRSDIAYQ…NVIPTDYLNQ (246 aa)). Residues His-127, Asp-155, and Ser-258 each act as charge relay system in the active site. The Autotransporter domain occupies 1106 to 1372 (DTNGDAGAWA…AVNANFRYMF (267 aa)).

In terms of processing, cleaved to release the mature protein from the outer membrane.

The protein localises to the periplasm. It is found in the secreted. It localises to the cell surface. The protein resides in the cell outer membrane. Functionally, involved in intestinal colonization, displays in vitro mucinolytic activity, serum resistance, and hemagglutination. Important to penetrate the intestinal mucus layer. This Escherichia coli O44:H18 (strain 042 / EAEC) protein is Serine protease pic autotransporter (pic).